Consider the following 376-residue polypeptide: Erythronate-4-phosphate dehydrogenase (376 aa).

2 residues coordinate substrate: Ser-45 and Thr-67. Residue Asp-147 participates in NAD(+) binding. The active site involves Arg-209. Residue Asp-233 coordinates NAD(+). Glu-238 is an active-site residue. Catalysis depends on His-255, which acts as the Proton donor. Gly-258 provides a ligand contact to NAD(+). Substrate is bound at residue Tyr-259.

This sequence belongs to the D-isomer specific 2-hydroxyacid dehydrogenase family. PdxB subfamily. In terms of assembly, homodimer.

The protein localises to the cytoplasm. The catalysed reaction is 4-phospho-D-erythronate + NAD(+) = (R)-3-hydroxy-2-oxo-4-phosphooxybutanoate + NADH + H(+). It participates in cofactor biosynthesis; pyridoxine 5'-phosphate biosynthesis; pyridoxine 5'-phosphate from D-erythrose 4-phosphate: step 2/5. In terms of biological role, catalyzes the oxidation of erythronate-4-phosphate to 3-hydroxy-2-oxo-4-phosphonooxybutanoate. The chain is Erythronate-4-phosphate dehydrogenase from Shewanella baltica (strain OS195).